The chain runs to 148 residues: 3-dehydroquinate dehydratase (148 aa).

Substrate contacts are provided by Asn-74, His-80, and Asp-87. His-100 serves as the catalytic Proton donor. Residues 101–102 (LS) and Arg-111 each bind substrate.

The protein belongs to the type-II 3-dehydroquinase family. Homododecamer.

It carries out the reaction 3-dehydroquinate = 3-dehydroshikimate + H2O. Its pathway is metabolic intermediate biosynthesis; chorismate biosynthesis; chorismate from D-erythrose 4-phosphate and phosphoenolpyruvate: step 3/7. In Bacillus subtilis (strain 168), this protein is 3-dehydroquinate dehydratase (yqhS).